The chain runs to 473 residues: tRNA-2-methylthio-N(6)-dimethylallyladenosine synthase (473 aa).

A disordered region spans residues 1 to 21; sequence MTQDSALLQAPEAIPSESLRD. The 121-residue stretch at 26–146 folds into the MTTase N-terminal domain; it reads RKVFIKTYGC…LPEALRRAKQ (121 aa). Residues cysteine 35, cysteine 71, cysteine 109, cysteine 187, cysteine 191, and cysteine 194 each contribute to the [4Fe-4S] cluster site. In terms of domain architecture, Radical SAM core spans 173 to 405; it reads RARGVTAFLT…QMLLLKQQQE (233 aa). The region spanning 408-470 is the TRAM domain; it reads ESCVGKEIDL…TNSLFAEHAE (63 aa).

This sequence belongs to the methylthiotransferase family. MiaB subfamily. Monomer. The cofactor is [4Fe-4S] cluster.

The protein localises to the cytoplasm. It carries out the reaction N(6)-dimethylallyladenosine(37) in tRNA + (sulfur carrier)-SH + AH2 + 2 S-adenosyl-L-methionine = 2-methylsulfanyl-N(6)-dimethylallyladenosine(37) in tRNA + (sulfur carrier)-H + 5'-deoxyadenosine + L-methionine + A + S-adenosyl-L-homocysteine + 2 H(+). In terms of biological role, catalyzes the methylthiolation of N6-(dimethylallyl)adenosine (i(6)A), leading to the formation of 2-methylthio-N6-(dimethylallyl)adenosine (ms(2)i(6)A) at position 37 in tRNAs that read codons beginning with uridine. In Rhizobium johnstonii (strain DSM 114642 / LMG 32736 / 3841) (Rhizobium leguminosarum bv. viciae), this protein is tRNA-2-methylthio-N(6)-dimethylallyladenosine synthase.